We begin with the raw amino-acid sequence, 192 residues long: Signal peptidase complex catalytic subunit SEC11C (192 aa).

Residues 2–28 (VRAGAVGTHLPASGLDIFGDLRKMNKR) are Cytoplasmic-facing. A helical; Signal-anchor for type II membrane protein transmembrane segment spans residues 29–48 (QLYYQVLNFAMIVSSALMIW). At 49–192 (KGLIVLTGSE…GAYVLLKRES (144 aa)) the chain is on the lumenal side. Catalysis depends on charge relay system residues Ser68, His108, and Asp134. Residues 177 to 188 (ALLAVMGAYVLL) are C-terminal short (CTS) helix.

It belongs to the peptidase S26B family. In terms of assembly, component of the signal peptidase complex paralog C (SPC-C) composed of a catalytic subunit SEC11C and three accessory subunits SPCS1, SPCS2 and SPCS3. Within the complex, interacts with SPCS2 and SPCS3. The complex induces a local thinning of the ER membrane which is used to measure the length of the signal peptide (SP) h-region of protein substrates. This ensures the selectivity of the complex towards h-regions shorter than 18-20 amino acids. Post-translationally, may undergo processing at the N-terminus.

The protein localises to the endoplasmic reticulum membrane. It carries out the reaction Cleavage of hydrophobic, N-terminal signal or leader sequences from secreted and periplasmic proteins.. Its function is as follows. Catalytic component of the signal peptidase complex (SPC) which catalyzes the cleavage of N-terminal signal sequences from nascent proteins as they are translocated into the lumen of the endoplasmic reticulum. Specifically cleaves N-terminal signal peptides that contain a hydrophobic alpha-helix (h-region) shorter than 18-20 amino acids. This Canis lupus familiaris (Dog) protein is Signal peptidase complex catalytic subunit SEC11C (SEC11C).